Consider the following 312-residue polypeptide: MDIIFYHPTFDTQWWIEALHKAIPQARVRAWKSGDNESADYALVWHPPVEMLAGRDLKAVFALGAGVDSILSKLQAHPEMLKPSVPLFRLEDTGMGEQMQEYAVSQVLHWFRRFDDYRIQQNSSHWQPLPEYHREDFTIGILGAGVLGSKVAQSLQTWRFPLRCWSRTRKSWPGVQSFAGREELSAFLSQCRVLINLLPNTPETVGIINQQLLEKLPDGAYLLNLARGVHVVEDDLLAALDSGKVKGAMLDVFNREPLPPESPLWQHPRVTITPHVAAITRPAEAVDYISRTIAQLEKGERVCGQVDRARGY.

Arg227 is an active-site residue. Residue His275 is the Proton donor of the active site.

This sequence belongs to the D-isomer specific 2-hydroxyacid dehydrogenase family. GhrA subfamily.

It localises to the cytoplasm. It carries out the reaction glycolate + NADP(+) = glyoxylate + NADPH + H(+). It catalyses the reaction (R)-glycerate + NAD(+) = 3-hydroxypyruvate + NADH + H(+). The catalysed reaction is (R)-glycerate + NADP(+) = 3-hydroxypyruvate + NADPH + H(+). In terms of biological role, catalyzes the NADPH-dependent reduction of glyoxylate and hydroxypyruvate into glycolate and glycerate, respectively. This chain is Glyoxylate/hydroxypyruvate reductase A, found in Escherichia coli O127:H6 (strain E2348/69 / EPEC).